A 299-amino-acid chain; its full sequence is Nicotinate-nucleotide pyrophosphorylase [carboxylating] (299 aa).

Residues 8 to 12 (LLLPP) are important for hexamer formation. Quinolinate-binding positions include arginine 102, 138–139 (RK), 160–161 (HR), lysine 171, glutamate 201, aspartate 222, 248–250 (SGG), and glycine 270.

Belongs to the NadC/ModD family. As to quaternary structure, hexamer formed by 3 homodimers.

The catalysed reaction is nicotinate beta-D-ribonucleotide + CO2 + diphosphate = quinolinate + 5-phospho-alpha-D-ribose 1-diphosphate + 2 H(+). Its pathway is cofactor biosynthesis; NAD(+) biosynthesis; nicotinate D-ribonucleotide from quinolinate: step 1/1. In terms of biological role, involved in the catabolism of quinolinic acid (QA). The protein is Nicotinate-nucleotide pyrophosphorylase [carboxylating] of Sus scrofa (Pig).